A 1112-amino-acid chain; its full sequence is cGMP-inhibited 3',5'-cyclic phosphodiesterase 3B (1112 aa).

The span at 1–10 (MRRDERDAKA) shows a compositional bias: basic and acidic residues. The segment at 1–25 (MRRDERDAKAMRSLQPPDGAGSPPE) is interaction with RAPGEF3. The segment at 1–26 (MRRDERDAKAMRSLQPPDGAGSPPES) is disordered. At Ser13 the chain carries Phosphoserine. Helical transmembrane passes span 88–108 (FVLA…AAWL), 117–137 (HSLS…CFLT), 152–172 (WWLL…WQWW), 192–212 (AAAG…TLAH), 220–240 (VLVL…LGSL), and 247–267 (LLSG…DHFF). The residue at position 295 (Ser295) is a Phosphoserine; by PKB/AKT1 or PKB/AKT2. Phosphoserine occurs at positions 296 and 442. A disordered region spans residues 418–471 (EKGDRKLNKGLNRNSLPTPQLRRSSGTSGLLPVEQSSRWDRNNGKRPHQEFGIS). The span at 428-445 (LNRNSLPTPQLRRSSGTS) shows a compositional bias: polar residues. Residues 436–460 (PQLRRSSGTSGLLPVEQSSRWDRNN) are interaction with PIK3R6. Over residues 454–466 (SRWDRNNGKRPHQ) the composition is skewed to basic and acidic residues. The 429-residue stretch at 651-1079 (TNIEQEVSLD…KIWKEIVEEE (429 aa)) folds into the PDEase domain. His737 acts as the Proton donor in catalysis. His737 serves as a coordination point for AMP. Mg(2+) contacts are provided by His741, His821, Asp822, and Asp937. 3 residues coordinate AMP: Asp822, Asp937, and Gln988. 2 stretches are compositionally biased toward acidic residues: residues 1017 to 1041 (EEDN…EEME) and 1103 to 1112 (QVIEEADEEE). Disordered regions lie at residues 1017–1051 (EEDN…PPRR) and 1092–1112 (ENSS…DEEE).

This sequence belongs to the cyclic nucleotide phosphodiesterase family. PDE3 subfamily. As to quaternary structure, homodimer. Interacts with PIK3CG; regulates PDE3B activity and thereby cAMP levels in cells. Interacts with RAPGEF3 and PIK3R6; form a signaling complex that regulates phosphatidylinositol 3-kinase gamma in angiogenesis. Interacts with ABHD15; this interaction regulates PDE3B's stability and expression and, thereby, impacts the antilipolytic action of insulin. Mg(2+) is required as a cofactor. The cofactor is Mn(2+). In terms of processing, phosphorylation at Ser-295 mediates insulin-induced activation of PDE3B. As to expression, abundant in adipose tissues.

It is found in the membrane. The catalysed reaction is a nucleoside 3',5'-cyclic phosphate + H2O = a nucleoside 5'-phosphate + H(+). The enzyme catalyses 3',5'-cyclic AMP + H2O = AMP + H(+). It carries out the reaction 3',5'-cyclic GMP + H2O = GMP + H(+). With respect to regulation, inhibited by cGMP. Cyclic nucleotide phosphodiesterase with a dual-specificity for the second messengers cAMP and cGMP, which are key regulators of many important physiological process. Regulates angiogenesis by inhibiting the cAMP-dependent guanine nucleotide exchange factor RAPGEF3 and downstream phosphatidylinositol 3-kinase gamma-mediated signaling. Controls cardiac contractility by reducing cAMP concentration in cardiocytes. This chain is cGMP-inhibited 3',5'-cyclic phosphodiesterase 3B, found in Homo sapiens (Human).